The sequence spans 241 residues: Small ribosomal subunit protein eS4 (241 aa).

The region spanning 37–100 (LPIVVWARDQ…GKHYRILRDK (64 aa)) is the S4 RNA-binding domain.

Belongs to the eukaryotic ribosomal protein eS4 family.

This Methanospirillum hungatei JF-1 (strain ATCC 27890 / DSM 864 / NBRC 100397 / JF-1) protein is Small ribosomal subunit protein eS4.